The sequence spans 373 residues: CASP-like protein UU6 (373 aa).

Disordered regions lie at residues 1–100 (MGTL…GSEG) and 172–195 (TKET…PKKK). Topologically, residues 1–204 (MGTLTDPTVD…KHRLRKHLTA (204 aa)) are cytoplasmic. The span at 56–74 (KTNTGNAAESTASTENGET) shows a compositional bias: polar residues. The helical transmembrane segment at 205 to 225 (IGAYSFAFRFSETVLSLIAIV) threads the bilayer. Over 226–253 (VMCSTRGSMRTDGVDFGTLKFNHFQAYR) the chain is Extracellular. Residues 254–274 (YLVAVNVIVFVYSTFQFIQLL) form a helical membrane-spanning segment. Over 275 to 276 (YT) the chain is Cytoplasmic. A helical transmembrane segment spans residues 277-297 (VILGISFIPSIFISTWMTFGF). Residues 298–342 (DQLFLYLLLSASTSAATVANMSYTGEMGIQLCSRFDVGSFCSKAD) are Extracellular-facing. Asn-317 is a glycosylation site (N-linked (GlcNAc...) asparagine). A helical transmembrane segment spans residues 343-363 (VAVTMSFFAVLAMLSSTILAI). Topologically, residues 364–373 (YRIAVLLREY) are cytoplasmic.

It belongs to the Casparian strip membrane proteins (CASP) family. As to quaternary structure, homodimer and heterodimers.

Its subcellular location is the cell membrane. In Physcomitrium patens (Spreading-leaved earth moss), this protein is CASP-like protein UU6.